We begin with the raw amino-acid sequence, 298 residues long: Inosose dehydratase (298 aa).

It belongs to the IolE/MocC family. The cofactor is glutathione. Co(2+) is required as a cofactor. Requires Mn(2+) as cofactor.

The enzyme catalyses scyllo-inosose = 3D-3,5/4-trihydroxycyclohexane-1,2-dione + H2O. The protein operates within polyol metabolism; myo-inositol degradation into acetyl-CoA; acetyl-CoA from myo-inositol: step 2/7. Its function is as follows. Catalyzes the dehydration of inosose (2-keto-myo-inositol, 2KMI or 2,4,6/3,5-pentahydroxycyclohexanone) to 3D-(3,5/4)-trihydroxycyclohexane-1,2-dione (D-2,3-diketo-4-deoxy-epi-inositol). The polypeptide is Inosose dehydratase (Bacillus velezensis (strain DSM 23117 / BGSC 10A6 / LMG 26770 / FZB42) (Bacillus amyloliquefaciens subsp. plantarum)).